We begin with the raw amino-acid sequence, 522 residues long: Probable mannosyltransferase KTR5 (522 aa).

Residues 1–16 (MLLIRRTINAFLGCIH) are Cytoplasmic-facing. Residues 17 to 37 (CNLTATCILIAFVITMYVVLV) traverse the membrane as a helical; Signal-anchor for type II membrane protein segment. The segment at 38-82 (SEPASVDGTMGNFLPFSKMDLATKRDRPFYSNCVNTQDYLLNPSY) is stem region. Topologically, residues 38–522 (SEPASVDGTM…REDYLRQFGN (485 aa)) are lumenal. The catalytic stretch occupies residues 83 to 522 (IKQNASFVML…REDYLRQFGN (440 aa)). Asparagine 86 carries N-linked (GlcNAc...) asparagine glycosylation. The active-site Nucleophile is the glutamate 363.

This sequence belongs to the glycosyltransferase 15 family.

The protein localises to the membrane. Its function is as follows. Possible glycosyltransferase that transfers an alpha-D-mannosyl residue from GDP-mannose into lipid-linked oligosaccharide, forming an alpha-(1-&gt;2)-D-mannosyl-D-mannose linkage. In Saccharomyces cerevisiae (strain ATCC 204508 / S288c) (Baker's yeast), this protein is Probable mannosyltransferase KTR5 (KTR5).